The following is a 266-amino-acid chain: Hydroxyethylthiazole kinase (266 aa).

Met43 lines the substrate pocket. Positions 119 and 166 each coordinate ATP. Gly193 is a substrate binding site.

This sequence belongs to the Thz kinase family. It depends on Mg(2+) as a cofactor.

The enzyme catalyses 5-(2-hydroxyethyl)-4-methylthiazole + ATP = 4-methyl-5-(2-phosphooxyethyl)-thiazole + ADP + H(+). It participates in cofactor biosynthesis; thiamine diphosphate biosynthesis; 4-methyl-5-(2-phosphoethyl)-thiazole from 5-(2-hydroxyethyl)-4-methylthiazole: step 1/1. Its function is as follows. Catalyzes the phosphorylation of the hydroxyl group of 4-methyl-5-beta-hydroxyethylthiazole (THZ). The protein is Hydroxyethylthiazole kinase of Methanococcus maripaludis (strain C7 / ATCC BAA-1331).